Consider the following 3010-residue polypeptide: Genome polyprotein (3010 aa).

An N-acetylserine; by host modification is found at Ser2. Residues 2-23 (STNPKPQRKTKRNTNRRPQDVK) form an interaction with STAT1 region. Positions 2 to 58 (STNPKPQRKTKRNTNRRPQDVKFPGGGQIVGGVYLLPRRGPRLGVRATRKASERSQP) are interaction with EIF2AK2/PKR. Residues 2 to 59 (STNPKPQRKTKRNTNRRPQDVKFPGGGQIVGGVYLLPRRGPRLGVRATRKASERSQPR) are interaction with DDX3X. Residues 2 to 75 (STNPKPQRKT…PKARRPEGRA (74 aa)) are disordered. Topologically, residues 2-168 (STNPKPQRKT…EDGVNYATGN (167 aa)) are cytoplasmic. Short sequence motifs (nuclear localization signal) lie at residues 5–13 (PKPQRKTKR) and 38–43 (PRRGPR). Positions 7-16 (PQRKTKRNTN) are enriched in basic residues. Residues 32-47 (GGVYLLPRRGPRLGVR) show a composition bias toward low complexity. Position 53 is a phosphoserine; by host (Ser53). 2 consecutive short sequence motifs (nuclear localization signal) follow at residues 58–64 (PRGRRQP) and 66–71 (PKARRP). The span at 58 to 68 (PRGRRQPIPKA) shows a compositional bias: basic residues. Ser99 carries the phosphoserine; by host modification. Residues 112-152 (PRRRSRNLGKVIDTLTCGFADLMGYIPLVGAPLGGAARALA) are important for endoplasmic reticulum and mitochondrial localization. Ser116 carries the phosphoserine; by host PKA modification. Positions 122-173 (VIDTLTCGFADLMGYIPLVGAPLGGAARALAHGVRVLEDGVNYATGNLPGCS) are interaction with APOA2. The interval 164-167 (YATG) is important for lipid droplets localization. A helical membrane pass occupies residues 169-189 (LPGCSFSIFLLALLSCLTIPA). Positions 178–191 (LLALLSCLTIPASA) are cleaved as a propeptide — ER anchor for the core protein, removed in mature form by host signal peptidase. Topologically, residues 190–358 (SAYEVRNVSG…AGAHWGVLAG (169 aa)) are lumenal. N-linked (GlcNAc...) asparagine; by host glycans are attached at residues Asn196, Asn209, Asn234, and Asn250. Residues 265–296 (LVGTAAFCSAMYVGDLCGSIFLVSQLFTFSPR) are important for fusion. Asn305 carries an N-linked (GlcNAc...) asparagine; by host glycan. A helical transmembrane segment spans residues 359 to 379 (LAYYSMVGNWAKVLIVALLFA). The Lumenal portion of the chain corresponds to 380-725 (GVDGETHTTG…WEYILLLFLL (346 aa)). Residues 385-411 (THTTGRVAGHTTSGFTSLFSSGASQKI) are HVR1. 4 N-linked (GlcNAc...) (high mannose) asparagine; by host glycosylation sites follow: Asn417, Asn423, Asn430, and Asn448. Cystine bridges form between Cys429/Cys552, Cys452/Cys459, Cys486/Cys494, and Cys503/Cys508. An HVR2 region spans residues 474 to 479 (YTKPNS). Residue Asn478 is glycosylated (N-linked (GlcNAc...) asparagine; by host). Residues 480-493 (SDQRPYCWHYAPRP) are CD81-binding 1. A glycan (N-linked (GlcNAc...) (high mannose) asparagine; by host) is linked at Asn532. The N-linked (GlcNAc...) asparagine; by host glycan is linked to Asn540. A CD81-binding 2 region spans residues 544 to 551 (PPQGNWFG). A glycan (N-linked (GlcNAc...) (high mannose) asparagine; by host) is linked at Asn556. Residues Cys564 and Cys569 are joined by a disulfide bond. The N-linked (GlcNAc...) (high mannose) asparagine; by host glycan is linked to Asn576. Cystine bridges form between Cys581/Cys585, Cys597/Cys620, and Cys607/Cys644. Asn623 and Asn645 each carry an N-linked (GlcNAc...) (high mannose) asparagine; by host glycan. An intrachain disulfide couples Cys652 to Cys677. The PKR/eIF2-alpha phosphorylation homology domain (PePHD) stretch occupies residues 660 to 671 (SELSPLLLSTTE). The chain crosses the membrane as a helical span at residues 726–746 (LADARVCACLWMMLLIAQAEA). The Lumenal segment spans residues 747 to 757 (ALENLVVLNAA). Residues 758-778 (SVAGAHGILSFLVFFCAAWYI) form a helical membrane-spanning segment. Residues 779–781 (KGR) lie on the Cytoplasmic side of the membrane. A helical transmembrane segment spans residues 782 to 803 (LAPGAAYAFYGVWPLLLLLLAL). The Lumenal segment spans residues 804-813 (PPRAYALDRE). Residues 814-834 (MAASCGGAVLVGLVFLTLSPY) traverse the membrane as a helical segment. Residues 835–838 (YKVF) lie on the Cytoplasmic side of the membrane. Residues 839 to 859 (LTRLIWWLQYFITRAEAHMQV) traverse the membrane as a helical segment. Topologically, residues 860–881 (WVPPLNVRGGRDAIILLTCAVH) are lumenal. Residues 882–902 (PELIFDITKLLLAILGPLMVL) traverse the membrane as a helical segment. The region spanning 903–1026 (QAGITRVPYF…SLEGQGWRLL (124 aa)) is the Peptidase C18 domain. Topologically, residues 903-1657 (QAGITRVPYF…CMSADLEVVT (755 aa)) are cytoplasmic. Positions 904–1206 (AGITRVPYFV…PVESMETTMR (303 aa)) are protease NS2-3. A lipid anchor (S-palmitoyl cysteine; by host) is attached at Cys922. The interaction with host SCPS1 stretch occupies residues 929–949 (AGGHYVQMAFMKLGALTGTYV). Residues His952, Glu972, and Cys993 each act as for protease NS2 activity; shared with dimeric partner in the active site. The Peptidase S29 domain occupies 1027–1208 (APITAYSQQT…ESMETTMRSP (182 aa)). Catalysis depends on charge relay system; for serine protease NS3 activity residues His1083 and Asp1107. Cys1123 and Cys1125 together coordinate Zn(2+). Catalysis depends on Ser1165, which acts as the Charge relay system; for serine protease NS3 activity. Zn(2+)-binding residues include Cys1171 and His1175. One can recognise a Helicase ATP-binding domain in the interval 1217–1369 (PAVPQTFQVA…PNIEEIGLSN (153 aa)). Residue 1230 to 1237 (APTGSGKS) coordinates ATP. The Mg(2+) site is built by Ser1237 and Glu1317. The DECH box signature appears at 1316–1319 (DECH). The segment at 1486-1497 (QRRGRTGRGRSG) is RNA-binding. Residues 1658–1678 (STWVLVGGVLAALAAYCLTTG) traverse the membrane as a helical segment. The tract at residues 1679–1690 (SVVIVGRIILSG) is NS3-binding. At 1679–1805 (SVVIVGRIIL…SITSPLTTQN (127 aa)) the chain is on the cytoplasmic side. The helical transmembrane segment at 1806 to 1824 (TLLFNILGGWVAAQLAPPS) threads the bilayer. The Lumenal segment spans residues 1825–1828 (AASA). The helical transmembrane segment at 1829-1849 (FVGAGIAGAAVGSIGLGKVLV) threads the bilayer. Position 1850 (Asp1850) is a topological domain, cytoplasmic. Residues 1851–1871 (ILAGYGAGVAGALVAFKVMSG) traverse the membrane as a helical segment. At 1872-1881 (EVPSTEDLVN) the chain is on the lumenal side. Residues 1882–1902 (LLPAILSPGALVVGVVCAAIL) form a helical membrane-spanning segment. The Cytoplasmic segment spans residues 1903–1972 (RRHVGPGEGA…WINEDCSTPC (70 aa)). Residues Cys1968 and Cys1972 are each lipidated (S-palmitoyl cysteine; by host). Residues 1973–2002 (SGSWLRDVWDWICTVLTDFKTWLQSKLLPR) lie within the membrane without spanning it. Over 2003 to 2989 (LPGVPFLSCQ…YHSLSRARPR (987 aa)) the chain is Cytoplasmic. Zn(2+) contacts are provided by Cys2011, Cys2029, Cys2031, and Cys2052. The FKBP8-binding stretch occupies residues 2120-2208 (EFFTEVDGVR…ASSSASQLSA (89 aa)). Positions 2120–2332 (EFFTEVDGVR…PIPPPRRKRT (213 aa)) are transcriptional activation. Residues 2135 to 2139 (PACKP) are interaction with non-structural protein 4A. Positions 2187 to 2219 (KRRLARGSPPSLASSSASQLSAPSLKATCTTHH) are disordered. The tract at residues 2189-2441 (RLARGSPPSL…PCAAEESKLP (253 aa)) is interaction with host SKP2. Position 2194 is a phosphoserine; by host; in p56 (Ser2194). A compositionally biased stretch (low complexity) spans 2194-2211 (SPPSLASSSASQLSAPSL). A phosphoserine; by host; in p58 mark is found at Ser2197, Ser2201, Ser2204, Ser2207, and Ser2210. The ISDR stretch occupies residues 2210–2249 (SLKATCTTHHDSPDADLIEANLLWRQEMGGNITRVESENK). Residues 2210–2275 (SLKATCTTHH…REISVAAEIL (66 aa)) form an interaction with EIF2AK2/PKR region. Residues 2249–2306 (KVVILDSFEPLHAEGDEREISVAAEILRKSRKFPSALPIWARPDYNPPLLESWKDPDY) form an NS4B-binding region. The SH3-binding motif lies at 2322–2325 (PPIP). Positions 2326–2334 (PPRRKRTVV) match the Nuclear localization signal motif. Lys2350 participates in a covalent cross-link: Glycyl lysine isopeptide (Lys-Gly) (interchain with G-Cter in ubiquitin). Residues 2351 to 2365 (TFGSSGSSAVDSGTA) are compositionally biased toward polar residues. A disordered region spans residues 2351-2407 (TFGSSGSSAVDSGTATALPDLASDDGDKGSDVESYSSMPPLEGEPGDPDLSDGSWST). The interval 2354–2377 (SSGSSAVDSGTATALPDLASDDGD) is V3. 2 positions are modified to phosphoserine; by host: Ser2448 and Ser2461. The RdRp catalytic domain occupies 2633–2751 (PMGFSYDTRC…ICESAGTQED (119 aa)). Positions 2639, 2737, and 2738 each coordinate Mg(2+). The helical transmembrane segment at 2990 to 3010 (WFPLCLLLLSVGVGIYLLPNR) threads the bilayer.

The protein belongs to the hepacivirus polyprotein family. In terms of assembly, homooligomer. Interacts with E1 (via C-terminus). Interacts with the non-structural protein 5A. Interacts (via N-terminus) with host STAT1 (via SH2 domain); this interaction results in decreased STAT1 phosphorylation and ubiquitin-mediated proteasome-dependent STAT1 degradation, leading to decreased IFN-stimulated gene transcription. Interacts with host STAT3; this interaction constitutively activates STAT3. Interacts with host LTBR receptor. Interacts with host TNFRSF1A receptor and possibly induces apoptosis. Interacts with host HNRPK. Interacts with host YWHAE. Interacts with host UBE3A/E6AP. Interacts with host DDX3X. Interacts with host APOA2. Interacts with host RXRA protein. Interacts with host SP110 isoform 3/Sp110b; this interaction sequesters the transcriptional corepressor SP110 away from the nucleus. Interacts with host CREB3 nuclear transcription protein; this interaction triggers cell transformation. Interacts with host ACY3. Interacts with host C1QR1. Interacts with host RBM24; this interaction, which enhances the interaction of the mature core protein with 5'-UTR, may inhibit viral translation and favor replication. Interacts with host EIF2AK2/PKR; this interaction induces the autophosphorylation of EIF2AK2. Part of the viral assembly initiation complex composed of NS2, E1, E2, NS3, NS4A, NS5A and the mature core protein. Forms a heterodimer with envelope glycoprotein E2. Interacts with mature core protein. Interacts with protease NS2. The heterodimer E1/E2 interacts with host CLDN1; this interaction plays a role in viral entry into host cell. Interacts with host SPSB2 (via C-terminus). Part of the viral assembly initiation complex composed of NS2, E1, E2, NS3, NS4A, NS5A and the mature core protein. Interacts with host NEURL3; this interaction prevents E1 binding to glycoprotein E2. As to quaternary structure, forms a heterodimer with envelope glycoprotein E1. Interacts with host CD81 and SCARB1 receptors; these interactions play a role in viral entry into host cell. Interacts with host EIF2AK2/PKR; this interaction inhibits EIF2AK2 and probably allows the virus to evade the innate immune response. Interacts with host CD209/DC-SIGN and CLEC4M/DC-SIGNR. Interact with host SPCS1; this interaction is essential for viral particle assembly. Interacts with protease NS2. The heterodimer E1/E2 interacts with host CLDN1; this interaction plays a role in viral entry into host cell. Part of the viral assembly initiation complex composed of NS2, E1, E2, NS3, NS4A, NS5A and the mature core protein. Interacts with host SLC3A2/4F2hc; the interaction may facilitate viral entry into host cell. Interacts with human PLSCR1. In terms of assembly, homohexamer. Homoheptamer. Interacts with protease NS2. Homodimer. Interacts with host SPCS1; this interaction is essential for viral particle assembly. Interacts with envelope glycoprotein E1. Interacts with envelope glycoprotein E2. Interacts with viroporin p7. Interacts with serine protease/helicase NS3. Part of the replication complex composed of NS2, NS3, NS4A, NS4B, NS5A and the RNA-directed RNA polymerase embedded in an ER-derived membranous web. Part of the viral assembly initiation complex composed of NS2, E1, E2, NS3, NS4A, NS5A and the mature core protein. As to quaternary structure, interacts with protease NS2. Interacts with non-structural protein 4A; this interaction stabilizes the folding of NS3 serine protease. NS3-NS4A interaction is essential for NS3 activation and allows membrane anchorage of the latter. NS3/NS4A complex also prevents phosphorylation of host IRF3, thus preventing the establishment of dsRNA induced antiviral state. Interacts with host MAVS; this interaction leads to the cleavage and inhibition of host MAVS. Interacts with host TICAM1; this interaction leads to the cleavage and inhibition of host TICAM1. Interacts with host TANK-binding kinase/TBK1; this interaction results in the inhibition of the association between TBK1 and IRF3, which leads to the inhibition of IRF3 activation. Interacts with host RBM24. Part of the replication complex composed of NS2, NS3, NS4A, NS4B, NS5A and the RNA-directed RNA polymerase embedded in an ER-derived membranous web. Part of the viral assembly initiation complex composed of NS2, E1, E2, NS3, NS4A, NS5A and the mature core protein. In terms of assembly, interacts with NS3 serine protease; this interaction stabilizes the folding of NS3 serine protease. NS3-NS4A interaction is essential for NS3 activation and allows membrane anchorage of the latter. Interacts with non-structural protein 5A (via N-terminus). Part of the replication complex composed of NS2, NS3, NS4A, NS4B, NS5A and the RNA-directed RNA polymerase embedded in an ER-derived membranous web. Part of the viral assembly initiation complex composed of NS2, E1, E2, NS3, NS4A, NS5A and the mature core protein. Homomultimer. Interacts with non-structural protein NS5A. Interacts with host PLA2G4C; this interaction likely initiates the recruitment of replication complexes to lipid droplets. Interacts with host STING; this interaction disrupts the interaction between STING and TBK1 thereby suppressing the interferon signaling. Part of the replication complex composed of NS2, NS3, NS4A, NS4B, NS5A and the RNA-directed RNA polymerase embedded in an ER-derived membranous web. As to quaternary structure, monomer. Homodimer; dimerization is required for RNA-binding. Interacts with the mature core protein. Interacts (via N-terminus) with non-structural protein 4A. Interacts with non-structural protein 4B. Interacts (via region D2) with RNA-directed RNA polymerase. Part of the viral assembly initiation complex composed of NS2, E1, E2, NS3, NS4A, NS5A and the mature core protein. Part of the replication complex composed of NS2, NS3, NS4A, NS4B, NS5A and the RNA-directed RNA polymerase embedded in an ER-derived membranous web. Interacts with host GRB2. Interacts with host BIN1. Interacts with host PIK3R1. Interacts with host SRCAP. Interacts with host FKBP8. Interacts (via C-terminus) with host VAPB (via MSP domain). Interacts with host EIF2AK2/PKR; this interaction leads to disruption of EIF2AK2 dimerization by NS5A and probably allows the virus to evade the innate immune response. Interacts (via N-terminus) with host PACSIN2 (via N-terminus); this interaction attenuates protein kinase C alpha-mediated phosphorylation of PACSIN2 by disrupting the interaction between PACSIN2 and PRKCA. Interacts (via N-terminus) with host SRC kinase (via SH2 domain). Interacts with most Src-family kinases. Interacts with host IFI27 and SKP2; promotes the ubiquitin-mediated proteasomal degradation of NS5A. Interacts with host GPS2. Interacts with host TNFRSF21; this interaction allows the modulation by the virus of JNK, p38 MAPK, STAT3, and Akt signaling pathways in a DR6-dependent manner. Interacts (via N-terminus) with host CIDEB (via N-terminus); this interaction seems to regulate the association of HCV particles with APOE. Interacts with host CHKA/Choline Kinase-alpha; CHKA bridges host PI4KA and NS5A and potentiates NS5A-stimulated PI4KA activity, which then facilitates the targeting of the ternary complex to the ER for viral replication. Interacts with host SPSB2 (via C-terminus); this interaction targets NS5A for ubiquitination and degradation. Interacts with host RAB18; this interaction may promote the association of NS5A and other replicase components with lipid droplets. Interacts (via region D2) with host PPIA/CYPA; the interaction stimulates RNA-binding ability of NS5A and is dependent on the peptidyl-prolyl cis-trans isomerase activity of PPIA/CYPA. Interacts with host TRIM14; this interaction induces the degradation of NS5A. In terms of assembly, homooligomer. Interacts with non-structural protein 5A. Interacts with host VAPB. Interacts with host PRK2/PKN2. Interacts with host HNRNPA1 and SEPT6; these interactions facilitate viral replication. Part of the replication complex composed of NS2, NS3, NS4A, NS4B, NS5A and the RNA-directed RNA polymerase. Zn(2+) is required as a cofactor. Requires Mg(2+) as cofactor. Post-translationally, specific enzymatic cleavages in vivo yield mature proteins. The structural proteins, core, E1, E2 and p7 are produced by proteolytic processing by host signal peptidases. The core protein precursor is synthesized as a 23 kDa, which is retained in the ER membrane through the hydrophobic signal peptide. Cleavage by the signal peptidase releases the 21 kDa mature core protein. The cleavage of the core protein precursor occurs between aminoacids 176 and 188 but the exact cleavage site is not known. Some degraded forms of the core protein appear as well during the course of infection. The other proteins (p7, NS2, NS3, NS4A, NS4B, NS5A and NS5B) are cleaved by the viral proteases. Autoprocessing between NS2 and NS3 is mediated by the NS2 cysteine protease catalytic domain and regulated by the NS3 N-terminal domain. Phosphorylated by host PKC and PKA. In terms of processing, ubiquitinated; mediated by UBE3A and leading to core protein subsequent proteasomal degradation. Post-translationally, highly N-glycosylated. Palmitoylation is required for NS2/3 autoprocessing and E2 recruitment to membranes. In terms of processing, palmitoylated. This modification may play a role in its polymerization or in protein-protein interactions. Post-translationally, phosphorylated on serines in a basal form termed p56. p58 is a hyperphosphorylated form of p56. p56 and p58 coexist in the cell in roughly equivalent amounts. Hyperphosphorylation is dependent on the presence of NS4A. Host CSNK1A1/CKI-alpha or RPS6KB1 kinases may be responsible for NS5A phosphorylation. Tyrosine phosphorylation is essential for the interaction with host SRC. In terms of processing, the N-terminus is phosphorylated by host PRK2/PKN2.

The protein resides in the host endoplasmic reticulum membrane. It is found in the host mitochondrion membrane. It localises to the virion. Its subcellular location is the host cytoplasm. The protein localises to the host nucleus. The protein resides in the host lipid droplet. It is found in the virion membrane. It localises to the host mitochondrion. Its subcellular location is the host cell membrane. The protein localises to the host perinuclear region. The catalysed reaction is Hydrolysis of four peptide bonds in the viral precursor polyprotein, commonly with Asp or Glu in the P6 position, Cys or Thr in P1 and Ser or Ala in P1'.. The enzyme catalyses a ribonucleoside 5'-triphosphate + H2O = a ribonucleoside 5'-diphosphate + phosphate + H(+). It catalyses the reaction ATP + H2O = ADP + phosphate + H(+). It carries out the reaction RNA(n) + a ribonucleoside 5'-triphosphate = RNA(n+1) + diphosphate. With respect to regulation, inhibited by the antiviral drug hexamethylene amiloride. Inhibited by amantadine. Inhibition by amantadine appears to be genotype-dependent. Also inhibited by long-alkyl-chain iminosugar derivatives. Activity is up-regulated by PRK2/PKN2-mediated phosphorylation. Its function is as follows. Packages viral RNA to form a viral nucleocapsid, and promotes virion budding. Participates in the viral particle production as a result of its interaction with the non-structural protein 5A. Binds RNA and may function as a RNA chaperone to induce the RNA structural rearrangements taking place during virus replication. Modulates viral translation initiation by interacting with viral IRES and 40S ribosomal subunit. Affects various cell signaling pathways, host immunity and lipid metabolism. Prevents the establishment of cellular antiviral state by blocking the interferon-alpha/beta (IFN-alpha/beta) and IFN-gamma signaling pathways and by blocking the formation of phosphorylated STAT1 and promoting ubiquitin-mediated proteasome-dependent degradation of STAT1. Activates STAT3 leading to cellular transformation. Regulates the activity of cellular genes, including c-myc and c-fos. May repress the promoter of p53, and sequester CREB3 and SP110 isoform 3/Sp110b in the cytoplasm. Represses cell cycle negative regulating factor CDKN1A, thereby interrupting an important check point of normal cell cycle regulation. Targets transcription factors involved in the regulation of inflammatory responses and in the immune response: suppresses TNF-induced NF-kappa-B activation, and activates AP-1. Binds to dendritic cells (DCs) via C1QR1, resulting in down-regulation of T-lymphocytes proliferation. Alters lipid metabolism by interacting with hepatocellular proteins involved in lipid accumulation and storage. Induces up-regulation of FAS promoter activity, and thereby contributes to the increased triglyceride accumulation in hepatocytes (steatosis). Forms a heterodimer with envelope glycoprotein E2, which mediates virus attachment to the host cell, virion internalization through clathrin-dependent endocytosis and fusion with host membrane. Fusion with the host cell is most likely mediated by both E1 and E2, through conformational rearrangements of the heterodimer required for fusion rather than a classical class II fusion mechanism. E1/E2 heterodimer binds host apolipoproteins such as APOB and APOE thereby forming a lipo-viro-particle (LVP). APOE associated to the LVP allows the initial virus attachment to cell surface receptors such as the heparan sulfate proteoglycans (HSPGs), syndecan-1 (SDC1), syndecan-1 (SDC2), the low-density lipoprotein receptor (LDLR) and scavenger receptor class B type I (SCARB1). The cholesterol transfer activity of SCARB1 allows E2 exposure and binding of E2 to SCARB1 and the tetraspanin CD81. E1/E2 heterodimer binding on CD81 activates the epithelial growth factor receptor (EGFR) signaling pathway. Diffusion of the complex E1-E2-EGFR-SCARB1-CD81 to the cell lateral membrane allows further interaction with Claudin 1 (CLDN1) and occludin (OCLN) to finally trigger HCV entry. Functionally, forms a heterodimer with envelope glycoprotein E1, which mediates virus attachment to the host cell, virion internalization through clathrin-dependent endocytosis and fusion with host membrane. Fusion with the host cell is most likely mediated by both E1 and E2, through conformational rearrangements of the heterodimer required for fusion rather than a classical class II fusion mechanism. The interaction between envelope glycoprotein E2 and host apolipoprotein E/APOE allows the proper assembly, maturation and infectivity of the viral particles. This interaction is probably promoted via the up-regulation of cellular autophagy by the virus. E1/E2 heterodimer binds host apolipoproteins such as APOB and APOE thereby forming a lipo-viro-particle (LVP). APOE associated to the LVP allows the initial virus attachment to cell surface receptors such as the heparan sulfate proteoglycans (HSPGs), syndecan-1 (SDC1), syndecan-1 (SDC2), the low-density lipoprotein receptor (LDLR) and scavenger receptor class B type I (SCARB1). The cholesterol transfer activity of SCARB1 allows E2 exposure and binding of E2 to SCARB1 and the tetraspanin CD81. E1/E2 heterodimer binding on CD81 activates the epithelial growth factor receptor (EGFR) signaling pathway. Diffusion of the complex E1-E2-EGFR-SCARB1-CD81 to the cell lateral membrane allows further interaction with Claudin 1 (CLDN1) and occludin (OCLN) to finally trigger HCV entry. Inhibits host EIF2AK2/PKR activation, preventing the establishment of an antiviral state. Viral ligand for CD209/DC-SIGN and CLEC4M/DC-SIGNR, which are respectively found on dendritic cells (DCs), and on liver sinusoidal endothelial cells and macrophage-like cells of lymph node sinuses. These interactions allow the capture of circulating HCV particles by these cells and subsequent transmission to permissive cells. Capture of circulating HCV particles by these SIGN+ cells may facilitate virus infection of proximal hepatocytes and lymphocyte subpopulations and may be essential for the establishment of persistent infection. In terms of biological role, ion channel protein that acts as a viroporin and plays an essential role in the assembly, envelopment and secretion of viral particles. Regulates the host cell secretory pathway, which induces the intracellular retention of viral glycoproteins and favors assembly of viral particles. Creates a pore in acidic organelles and releases Ca(2+) and H(+) in the cytoplasm of infected cells, leading to a productive viral infection. High levels of cytoplasmic Ca(2+) may trigger membrane trafficking and transport of viral ER-associated proteins to viroplasms, sites of viral genome replication. This ionic imbalance induces the assembly of the inflammasome complex, which triggers the maturation of pro-IL-1beta into IL-1beta through the action of caspase-1. Targets also host mitochondria and induces mitochondrial depolarization. In addition of its role as a viroporin, acts as a lipid raft adhesion factor. Its function is as follows. Cysteine protease required for the proteolytic auto-cleavage between the non-structural proteins NS2 and NS3. The N-terminus of NS3 is required for the function of NS2 protease (active region NS2-3). Promotes the initiation of viral particle assembly by mediating the interaction between structural and non-structural proteins. Displays three enzymatic activities: serine protease with a chymotrypsin-like fold, NTPase and RNA helicase. NS3 serine protease, in association with NS4A, is responsible for the cleavages of NS3-NS4A, NS4A-NS4B, NS4B-NS5A and NS5A-NS5B. The NS3/NS4A complex prevents phosphorylation of host IRF3, thus preventing the establishment of dsRNA induced antiviral state. The NS3/NS4A complex induces host amino acid transporter component SLC3A2, thus contributing to HCV propagation. NS3 RNA helicase binds to RNA and unwinds both dsDNA and dsRNA in the 3' to 5' direction, and likely resolves RNA complicated stable secondary structures in the template strand. Binds a single ATP and catalyzes the unzipping of a single base pair of dsRNA. Inhibits host antiviral proteins TBK1 and IRF3 thereby preventing the establishment of an antiviral state. Cleaves host MAVS/CARDIF thereby preventing the establishment of an antiviral state. Cleaves host TICAM1/TRIF, thereby disrupting TLR3 signaling and preventing the establishment of an antiviral state. Functionally, induces a specific membrane alteration that serves as a scaffold for the virus replication complex. This membrane alteration gives rise to the so-called ER-derived membranous web that contains the replication complex. NS4B self-interaction contributes to its function in membranous web formation. Promotes host TRIF protein degradation in a CASP8-dependent manner thereby inhibiting host TLR3-mediated interferon signaling. Disrupts the interaction between STING and TBK1 contributing to the inhibition of interferon signaling. In terms of biological role, phosphorylated protein that is indispensable for viral replication and assembly. Both hypo- and hyperphosphorylated states are required for the viral life cycle. The hyperphosphorylated form of NS5A is an inhibitor of viral replication. Involved in RNA-binding and especially in binding to the viral genome. Zinc is essential for RNA-binding. Participates in the viral particle production as a result of its interaction with the mature viral core protein. Its interaction with host VAPB may target the viral replication complex to vesicles. Down-regulates viral IRES translation initiation. Mediates interferon resistance, presumably by interacting with and inhibiting host EIF2AK2/PKR. Prevents BIN1-induced apoptosis. Acts as a transcriptional activator of some host genes important for viral replication when localized in the nucleus. Via the interaction with host PACSIN2, modulates lipid droplet formation in order to promote virion assembly. Modulates TNFRSF21/DR6 signaling pathway for viral propagation. Its function is as follows. RNA-dependent RNA polymerase that performs primer-template recognition and RNA synthesis during viral replication. Initiates RNA transcription/replication at a flavin adenine dinucleotide (FAD), resulting in a 5'- FAD cap on viral RNAs. In this way, recognition of viral 5' RNA by host pattern recognition receptors can be bypassed, thereby evading activation of antiviral pathways. In Hepatitis C virus genotype 1b (strain HC-J4) (HCV), this protein is Genome polyprotein.